The sequence spans 94 residues: Acylphosphatase (94 aa).

Positions 5-94 (RLTAFVHGHV…PRDVEGFVER (90 aa)) constitute an Acylphosphatase-like domain. Active-site residues include Arg20 and Asn38.

The protein belongs to the acylphosphatase family.

It carries out the reaction an acyl phosphate + H2O = a carboxylate + phosphate + H(+). This Corynebacterium glutamicum (strain ATCC 13032 / DSM 20300 / JCM 1318 / BCRC 11384 / CCUG 27702 / LMG 3730 / NBRC 12168 / NCIMB 10025 / NRRL B-2784 / 534) protein is Acylphosphatase (acyP).